The primary structure comprises 336 residues: MGAAGSSALARLGLPALPGPRWLGVAALGLAAVALGAVAWRRARPGRRRRLQQVGTVSELWIYPIKSCKGVSVDAAECTALGLRSGHLRDRFWLVIKEDGHMVTGRQEPQLVLVSITYEDDCLILRAPGMDQLVLPTKLLSSNKLHDCRVFGLDIQGRDCGDEAAQWFTSFLKTDAFRLVQFEKNMKARASNEIFPSLDKNYQVAYPDCSPVMILSEASLADLNTRMEKKVKINNFRPNIVVTGCSAFEEDTWDELLIGNVEMKKILACPRCIMTTVDPDTGVIDRKEPLETLKSYRLCDPSEKSIYKSSPLFGIYYSVEKIGSLKVGDPVYQMVQ.

Residues 1 to 35 (MGAAGSSALARLGLPALPGPRWLGVAALGLAAVAL) constitute a mitochondrion transit peptide. Residues K138, K144, K173, K187, K287, and K294 each participate in a glycyl lysine isopeptide (Lys-Gly) (interchain with G-Cter in ubiquitin) cross-link. The 147-residue stretch at 188–334 (ARASNEIFPS…LKVGDPVYQM (147 aa)) folds into the MOSC domain.

Component of a complex composed of cytochrome b5, NADH-cytochrome b5 reductase (CYB5R3) and MTARC2. Requires Mo-molybdopterin as cofactor. Post-translationally, ubiquitinated by PRKN during mitophagy, leading to its degradation and enhancement of mitophagy. Deubiquitinated by USP30.

It localises to the mitochondrion outer membrane. The protein localises to the peroxisome. The enzyme catalyses N(omega)-hydroxy-L-arginine + 2 Fe(II)-[cytochrome b5] + 2 H(+) = L-arginine + 2 Fe(III)-[cytochrome b5] + H2O. Functionally, catalyzes the reduction of N-oxygenated molecules, acting as a counterpart of cytochrome P450 and flavin-containing monooxygenases in metabolic cycles. As a component of prodrug-converting system, reduces a multitude of N-hydroxylated prodrugs particularly amidoximes, leading to increased drug bioavailability. May be involved in mitochondrial N(omega)-hydroxy-L-arginine (NOHA) reduction, regulating endogenous nitric oxide levels and biosynthesis. Postulated to cleave the N-OH bond of N-hydroxylated substrates in concert with electron transfer from NADH to cytochrome b5 reductase then to cytochrome b5, the ultimate electron donor that primes the active site for substrate reduction. This is Mitochondrial amidoxime reducing component 2 (MTARC2) from Bos taurus (Bovine).